The following is a 280-amino-acid chain: L-proline cis-4-hydroxylase (280 aa).

3 residues coordinate Fe cation: His-106, Asp-108, and His-154. A 2-oxoglutarate-binding site is contributed by Arg-164.

The protein belongs to the L-proline cis-4-/cis-3-hydroxylase family. It depends on Fe(2+) as a cofactor.

The catalysed reaction is L-proline + 2-oxoglutarate + O2 = cis-4-hydroxy-L-proline + succinate + CO2. Inhibited by metal ions such as Co(2+), Zn(2+), Cu(2+) or Ni(2+). Is also inhibited by EDTA or diethylpyrocarbonate (DEPC) in vitro. Unlike the procollagen-proline cis-3- and trans-4-hydroxylases from mammals, does not necessarily require L-ascorbate for activity although it does increase the activity of the enzyme. Dioxygenase that catalyzes the 2-oxoglutarate-dependent selective hydroxylation of free L-proline to cis-4-hydroxy-L-proline (cis-4-Hyp). The polypeptide is L-proline cis-4-hydroxylase (Rhizobium meliloti (strain 1021) (Ensifer meliloti)).